The sequence spans 334 residues: Protein-methionine-sulfoxide reductase catalytic subunit MsrP (334 aa).

The tat-type signal signal peptide spans 1 to 44 (MKKNQFLKESDVTAESVFFMKRRQVLKALGISATALSLPHAAHA). Mo-molybdopterin is bound by residues N88, 91–92 (YE), C146, T181, N233, R238, and 249–251 (GIK).

Belongs to the MsrP family. In terms of assembly, heterodimer of a catalytic subunit (MsrP) and a heme-binding subunit (MsrQ). Requires Mo-molybdopterin as cofactor. In terms of processing, predicted to be exported by the Tat system. The position of the signal peptide cleavage has not been experimentally proven.

The protein resides in the periplasm. The enzyme catalyses L-methionyl-[protein] + a quinone + H2O = L-methionyl-(S)-S-oxide-[protein] + a quinol. It catalyses the reaction L-methionyl-[protein] + a quinone + H2O = L-methionyl-(R)-S-oxide-[protein] + a quinol. In terms of biological role, part of the MsrPQ system that repairs oxidized periplasmic proteins containing methionine sulfoxide residues (Met-O), using respiratory chain electrons. Thus protects these proteins from oxidative-stress damage caused by reactive species of oxygen and chlorine generated by the host defense mechanisms. MsrPQ is essential for the maintenance of envelope integrity under bleach stress, rescuing a wide series of structurally unrelated periplasmic proteins from methionine oxidation, including the primary periplasmic chaperone SurA and the lipoprotein Pal. The catalytic subunit MsrP is non-stereospecific, being able to reduce both (R-) and (S-) diastereoisomers of methionine sulfoxide. This is Protein-methionine-sulfoxide reductase catalytic subunit MsrP from Escherichia coli (strain K12 / MC4100 / BW2952).